A 571-amino-acid polypeptide reads, in one-letter code: Sulfite reductase [NADPH] hemoprotein beta-component (571 aa).

4 residues coordinate [4Fe-4S] cluster: Cys435, Cys441, Cys480, and Cys484. Siroheme is bound at residue Cys484.

It belongs to the nitrite and sulfite reductase 4Fe-4S domain family. Alpha(8)-beta(8). The alpha component is a flavoprotein, the beta component is a hemoprotein. Requires siroheme as cofactor. [4Fe-4S] cluster serves as cofactor.

It catalyses the reaction hydrogen sulfide + 3 NADP(+) + 3 H2O = sulfite + 3 NADPH + 4 H(+). It participates in sulfur metabolism; hydrogen sulfide biosynthesis; hydrogen sulfide from sulfite (NADPH route): step 1/1. In terms of biological role, component of the sulfite reductase complex that catalyzes the 6-electron reduction of sulfite to sulfide. This is one of several activities required for the biosynthesis of L-cysteine from sulfate. The protein is Sulfite reductase [NADPH] hemoprotein beta-component of Serratia proteamaculans (strain 568).